A 486-amino-acid polypeptide reads, in one-letter code: Glycogen synthase (486 aa).

K20 is a binding site for ADP-alpha-D-glucose.

The protein belongs to the glycosyltransferase 1 family. Bacterial/plant glycogen synthase subfamily.

The enzyme catalyses [(1-&gt;4)-alpha-D-glucosyl](n) + ADP-alpha-D-glucose = [(1-&gt;4)-alpha-D-glucosyl](n+1) + ADP + H(+). Its pathway is glycan biosynthesis; glycogen biosynthesis. Its function is as follows. Synthesizes alpha-1,4-glucan chains using ADP-glucose. The polypeptide is Glycogen synthase (Aeromonas hydrophila subsp. hydrophila (strain ATCC 7966 / DSM 30187 / BCRC 13018 / CCUG 14551 / JCM 1027 / KCTC 2358 / NCIMB 9240 / NCTC 8049)).